The following is a 21-amino-acid chain: Serine protease inhibitor 1 (21 aa).

Positions 1–21 (EQQCTPGQTKKEDCNNCTSGD) constitute a Pacifastin domain. The disordered stretch occupies residues 1-21 (EQQCTPGQTKKEDCNNCTSGD).

It belongs to the protease inhibitor I19 family. Expressed in hemolymph.

The protein resides in the secreted. Functionally, probable serine protease inhibitor. The protein is Serine protease inhibitor 1 of Melanoplus sanguinipes (Migratory grasshopper).